The chain runs to 312 residues: tRNA pseudouridine synthase B (312 aa).

The active-site Nucleophile is Asp48.

Belongs to the pseudouridine synthase TruB family. Type 1 subfamily.

The enzyme catalyses uridine(55) in tRNA = pseudouridine(55) in tRNA. Its function is as follows. Responsible for synthesis of pseudouridine from uracil-55 in the psi GC loop of transfer RNAs. The polypeptide is tRNA pseudouridine synthase B (Haemophilus influenzae (strain ATCC 51907 / DSM 11121 / KW20 / Rd)).